The following is a 445-amino-acid chain: Lipid A 1-phosphatase (445 aa).

The first 22 residues, 1–22, serve as a signal peptide directing secretion; the sequence is MNRESFLLLLVLLFALPLHLQA.

It localises to the periplasm. Its pathway is bacterial outer membrane biogenesis; LPS lipid A biosynthesis. Removes the 1-phosphate group from lipid A species. Absence of phosphate groups in lipid A renders the bacteria resistant to host-derived cationic antimicrobial peptides (CAMP) and allowing it to camouflage itself from the host innate immune response. This chain is Lipid A 1-phosphatase, found in Porphyromonas gingivalis (strain ATCC 33277 / DSM 20709 / CIP 103683 / JCM 12257 / NCTC 11834 / 2561).